Reading from the N-terminus, the 683-residue chain is Cytochrome P450 monooxygenase htyF (683 aa).

Residues 8 to 28 (PALLAASVVLAVSLVSYVIQL) form a helical membrane-spanning segment. A glycan (N-linked (GlcNAc...) asparagine) is linked at Asn29. Cys481 serves as a coordination point for heme. The N-linked (GlcNAc...) asparagine glycan is linked to Asn581. Residues 588 to 608 (LYVFVVLVACVAALFIGIGIY) traverse the membrane as a helical segment.

It belongs to the cytochrome P450 family. The cofactor is heme.

It localises to the membrane. The protein operates within antifungal biosynthesis. Cytochrome P450 monooxygenase; part of the gene cluster that mediates the de novo generation of L-homotyrosine from acetyl-CoA and 4-hydroxyphenyl-pyruvate. L-homotyrosine is a building block of echinocandin B, a fungal lipidated cyclic hexapeptide that acts as an antifungal agent. L-homotyrosine 4-hydroxyphenyl-pyruvate first undergoes an aldol-type condensation by htyA with the C-2 of acetyl-CoA followed by the release of CoA to form 2-(4-hydroxybenzyl)-malate. This is followed by isomerization of 2-(4-hydroxy-benzyl)-malate to 3-(4-hydroxybenzyl)-malate by htyD. Thereafter, 3-(4-hydroxybenzyl)-malate undergoes decarboxylation and oxidation to form 2-oxo-4-(4-hydroxybenzyl)butanoic acid, coupled to reduction of NAD(+) to NADH by htyC. The product then undergoes transamination catalyzed by htyB to form L-homotyrosine. The protein is Cytochrome P450 monooxygenase htyF of Aspergillus rugulosus (Emericella rugulosa).